We begin with the raw amino-acid sequence, 166 residues long: uncharacterized protein (166 aa).

This is an uncharacterized protein from Bacillus subtilis (strain 168).